Reading from the N-terminus, the 409-residue chain is LL-diaminopimelate aminotransferase (409 aa).

Substrate contacts are provided by Y15 and G42. Pyridoxal 5'-phosphate-binding positions include Y72, 108–109, Y132, N187, Y218, and 246–248; these read SK and SFS. The substrate site is built by K109, Y132, and N187. K249 is modified (N6-(pyridoxal phosphate)lysine). Pyridoxal 5'-phosphate-binding residues include R257 and N292. Residues N292 and R388 each contribute to the substrate site.

The protein belongs to the class-I pyridoxal-phosphate-dependent aminotransferase family. LL-diaminopimelate aminotransferase subfamily. Homodimer. Pyridoxal 5'-phosphate serves as cofactor.

It carries out the reaction (2S,6S)-2,6-diaminopimelate + 2-oxoglutarate = (S)-2,3,4,5-tetrahydrodipicolinate + L-glutamate + H2O + H(+). It functions in the pathway amino-acid biosynthesis; L-lysine biosynthesis via DAP pathway; LL-2,6-diaminopimelate from (S)-tetrahydrodipicolinate (aminotransferase route): step 1/1. Functionally, involved in the synthesis of meso-diaminopimelate (m-DAP or DL-DAP), required for both lysine and peptidoglycan biosynthesis. Catalyzes the direct conversion of tetrahydrodipicolinate to LL-diaminopimelate. The chain is LL-diaminopimelate aminotransferase from Acaryochloris marina (strain MBIC 11017).